The sequence spans 149 residues: MSTITIHTDGACSGNPGPGGWGAILEWNGHRKELKGGEADTTNNRMEMMAAIQALEALRKADRSVILITDSVYLRDGITKWIHGWKKRGWKTADKKPVKNVDLWQRLDELTRSHTIDWRWVKGHAGDPGNERADELAREGLAEARGRQP.

Positions 1 to 142 constitute an RNase H type-1 domain; it reads MSTITIHTDG…ADELAREGLA (142 aa). 4 residues coordinate Mg(2+): aspartate 9, glutamate 47, aspartate 70, and aspartate 134. A disordered region spans residues 124-149; sequence HAGDPGNERADELAREGLAEARGRQP. Positions 129–149 are enriched in basic and acidic residues; the sequence is GNERADELAREGLAEARGRQP.

It belongs to the RNase H family. As to quaternary structure, monomer. The cofactor is Mg(2+).

The protein localises to the cytoplasm. The catalysed reaction is Endonucleolytic cleavage to 5'-phosphomonoester.. In terms of biological role, endonuclease that specifically degrades the RNA of RNA-DNA hybrids. The polypeptide is Ribonuclease H (Maricaulis maris (strain MCS10) (Caulobacter maris)).